A 129-amino-acid polypeptide reads, in one-letter code: NADPH-dependent 7-cyano-7-deazaguanine reductase (129 aa).

The Thioimide intermediate role is filled by cysteine 43. Catalysis depends on aspartate 50, which acts as the Proton donor. Residues 65 to 67 and 84 to 85 contribute to the substrate site; these read VEL and HE.

Belongs to the GTP cyclohydrolase I family. QueF type 1 subfamily.

It localises to the cytoplasm. The catalysed reaction is 7-aminomethyl-7-carbaguanine + 2 NADP(+) = 7-cyano-7-deazaguanine + 2 NADPH + 3 H(+). The protein operates within tRNA modification; tRNA-queuosine biosynthesis. Functionally, catalyzes the NADPH-dependent reduction of 7-cyano-7-deazaguanine (preQ0) to 7-aminomethyl-7-deazaguanine (preQ1). The chain is NADPH-dependent 7-cyano-7-deazaguanine reductase from Aquifex aeolicus (strain VF5).